Here is a 312-residue protein sequence, read N- to C-terminus: MDLKNGSLVTEFILLGFFGRWELQIFFFVTFSLIYGATVMGNILIMVTVTCRSTLHSPLYFLLGNLSFLDMCLSTATTPKMIIDLLTDHKTISVWGCVTQMFFMHFFGGAEMTLLIIMAFDRYVAICKPLHYRTIMSHKLLKGFAILSWIIGFLHSISQIVLTMNLPFCGHNVINNIFCDLPLVIKLACIETYTLELFVIADSGLLSFTCFILLLVSYIVILVSVPKKSSHGLSKALSTLSAHIIVVTLFFGPCIFIYVWPFSSLASNKTLAVFYTVITPLLNPSIYTLRNKKMQEAIRKLRFQYVSSAQNF.

The Extracellular segment spans residues 1 to 25 (MDLKNGSLVTEFILLGFFGRWELQI). Asparagine 5 carries N-linked (GlcNAc...) asparagine glycosylation. A helical transmembrane segment spans residues 26–49 (FFFVTFSLIYGATVMGNILIMVTV). Topologically, residues 50-57 (TCRSTLHS) are cytoplasmic. The helical transmembrane segment at 58 to 79 (PLYFLLGNLSFLDMCLSTATTP) threads the bilayer. Residues 80–100 (KMIIDLLTDHKTISVWGCVTQ) are Extracellular-facing. A disulfide bond links cysteine 97 and cysteine 189. The helical transmembrane segment at 101 to 120 (MFFMHFFGGAEMTLLIIMAF) threads the bilayer. Residues 121–139 (DRYVAICKPLHYRTIMSHK) are Cytoplasmic-facing. Residues 140–158 (LLKGFAILSWIIGFLHSIS) form a helical membrane-spanning segment. The Extracellular portion of the chain corresponds to 159–195 (QIVLTMNLPFCGHNVINNIFCDLPLVIKLACIETYTL). A helical transmembrane segment spans residues 196–219 (ELFVIADSGLLSFTCFILLLVSYI). Residues 220 to 235 (VILVSVPKKSSHGLSK) are Cytoplasmic-facing. The helical transmembrane segment at 236 to 258 (ALSTLSAHIIVVTLFFGPCIFIY) threads the bilayer. Topologically, residues 259–269 (VWPFSSLASNK) are extracellular. Asparagine 268 is a glycosylation site (N-linked (GlcNAc...) asparagine). Residues 270–289 (TLAVFYTVITPLLNPSIYTL) form a helical membrane-spanning segment. Over 290–312 (RNKKMQEAIRKLRFQYVSSAQNF) the chain is Cytoplasmic.

It belongs to the G-protein coupled receptor 1 family.

Its subcellular location is the cell membrane. Its function is as follows. Odorant receptor. The polypeptide is Olfactory receptor 4L1 (OR4L1) (Homo sapiens (Human)).